A 278-amino-acid chain; its full sequence is Large ribosomal subunit protein uL2 (278 aa).

Disordered regions lie at residues 32 to 54 and 221 to 278; these read SLCR…TRHI and RGMT…RNAK. Gly residues predominate over residues 232–245; it reads NGGGEGKSKSGGGR.

Belongs to the universal ribosomal protein uL2 family. Part of the 50S ribosomal subunit. Forms a bridge to the 30S subunit in the 70S ribosome.

Functionally, one of the primary rRNA binding proteins. Required for association of the 30S and 50S subunits to form the 70S ribosome, for tRNA binding and peptide bond formation. It has been suggested to have peptidyltransferase activity; this is somewhat controversial. Makes several contacts with the 16S rRNA in the 70S ribosome. The chain is Large ribosomal subunit protein uL2 from Akkermansia muciniphila (strain ATCC BAA-835 / DSM 22959 / JCM 33894 / BCRC 81048 / CCUG 64013 / CIP 107961 / Muc).